Here is a 186-residue protein sequence, read N- to C-terminus: Nuclear transcription factor Y subunit C-5 (186 aa).

The tract at residues 166–186 (QMPGAWTEEDATGANGGNGGN) is disordered.

This sequence belongs to the NFYC/HAP5 subunit family. Heterotrimeric transcription factor composed of three components, NF-YA, NF-YB and NF-YC. NF-YB and NF-YC must interact and dimerize for NF-YA association and DNA binding. Expressed in inflorescences and flowers.

It localises to the nucleus. Stimulates the transcription of various genes by recognizing and binding to a CCAAT motif in promoters. In Arabidopsis thaliana (Mouse-ear cress), this protein is Nuclear transcription factor Y subunit C-5 (NFYC5).